A 370-amino-acid chain; its full sequence is tRNA-specific 2-thiouridylase MnmA (370 aa).

ATP contacts are provided by residues 7-14 (ALSGGVDS) and Met-34. Residues 104 to 106 (NPD) form an interaction with target base in tRNA region. Residue Cys-109 is the Nucleophile of the active site. A disulfide bridge connects residues Cys-109 and Cys-202. Gly-134 contacts ATP. Positions 152–154 (KDQ) are interaction with tRNA. Catalysis depends on Cys-202, which acts as the Cysteine persulfide intermediate. Residues 308 to 309 (RY) are interaction with tRNA.

Belongs to the MnmA/TRMU family.

Its subcellular location is the cytoplasm. It catalyses the reaction S-sulfanyl-L-cysteinyl-[protein] + uridine(34) in tRNA + AH2 + ATP = 2-thiouridine(34) in tRNA + L-cysteinyl-[protein] + A + AMP + diphosphate + H(+). Catalyzes the 2-thiolation of uridine at the wobble position (U34) of tRNA, leading to the formation of s(2)U34. The protein is tRNA-specific 2-thiouridylase MnmA of Mycoplasma mobile (strain ATCC 43663 / 163K / NCTC 11711) (Mesomycoplasma mobile).